A 453-amino-acid chain; its full sequence is Putative folate transporter 2 (453 aa).

11 helical membrane-spanning segments follow: residues 41–64 (IVVY…YYLF), 76–96 (SLIL…ALIT), 108–126 (PYLF…SLAL), 132–156 (IQAT…EALV), 176–195 (IASK…YFLE), 201–220 (YIFM…CLFL), 241–260 (FINT…YMSG), 280–300 (SFMG…IIVY), 312–330 (TLIF…PIIL), 346–366 (VLSG…PLFI), and 416–437 (LSMY…VPLL).

The protein belongs to the major facilitator superfamily. Folate-biopterin transporter (TC 2.A.71) family.

The protein resides in the plastid. The protein localises to the apicoplast. It is found in the membrane. Putative folate transporter. Required for sporogony of malaria parasites and host switching. The polypeptide is Putative folate transporter 2 (Plasmodium berghei (strain Anka)).